The sequence spans 558 residues: 2-isopropylmalate synthase (558 aa).

Positions 30–303 constitute a Pyruvate carboxyltransferase domain; that stretch reads PIWCSVDLRD…DPELDCRDIE (274 aa). Residues D39, H242, H244, and N278 each coordinate Mg(2+). Residues 437-558 are regulatory domain; that stretch reads QPNARIKFVD…ANRVLEERAK (122 aa).

Belongs to the alpha-IPM synthase/homocitrate synthase family. LeuA type 2 subfamily. Homodimer. Mg(2+) is required as a cofactor.

The protein localises to the cytoplasm. The catalysed reaction is 3-methyl-2-oxobutanoate + acetyl-CoA + H2O = (2S)-2-isopropylmalate + CoA + H(+). The protein operates within amino-acid biosynthesis; L-leucine biosynthesis; L-leucine from 3-methyl-2-oxobutanoate: step 1/4. Functionally, catalyzes the condensation of the acetyl group of acetyl-CoA with 3-methyl-2-oxobutanoate (2-ketoisovalerate) to form 3-carboxy-3-hydroxy-4-methylpentanoate (2-isopropylmalate). This chain is 2-isopropylmalate synthase, found in Agrobacterium fabrum (strain C58 / ATCC 33970) (Agrobacterium tumefaciens (strain C58)).